Here is a 749-residue protein sequence, read N- to C-terminus: Signal transducer and activator of transcription 4 (749 aa).

In terms of domain architecture, SH2 spans 570–665 (WIDGYIMGFV…ENPLKYLYPD (96 aa)). Lys668 bears the N6-acetyllysine mark. Tyr694 is subject to Phosphotyrosine; by JAK. Residue Ser722 is modified to Phosphoserine.

Belongs to the transcription factor STAT family. In terms of assembly, forms a homodimer or a heterodimer with a related family member. Interacts with ARL2BP. Interacts with STAT1. Interacts with JUN; this complex efficiently interacts with the AP-1-related sequence of the IFN-gamma promoter. Post-translationally, acetylation at Lys-668 is required for JAK2-mediated phosphorylation and activation of STAT4. Tyrosine phosphorylated upon IL12 and IFN-alpha activation, but not by IFN-gamma in T-lymphocytes and NK cells. Serine phosphorylation is required for maximal transcriptional activity but not for DNA binding. Phosphorylation by MAP2K6 at Ser-722 is required for full transcriptional activity induced by IL12. However this serine phosphorylation is not required for cell proliferation although critical for IFN-gamma production. In terms of tissue distribution, expression is restricted to testis, thymus, and spleen.

The protein resides in the cytoplasm. The protein localises to the nucleus. Its function is as follows. Transcriptional regulator mainly expressed in hematopoietic cells that plays a critical role in cellular growth, differentiation and immune response. Plays a key role in the differentiation of T-helper 1 cells and the production of interferon-gamma. Also participates in multiple neutrophil functions including chemotaxis and production of the neutrophil extracellular traps. After IL12 binding to its receptor IL12RB2, STAT4 interacts with the intracellular domain of IL12RB2 and becomes tyrosine phosphorylated. Phosphorylated STAT4 then homodimerizes and migrates to the nucleus where it can recognize STAT target sequences present in IL12 responsive genes. Although IL12 appears to be the predominant activating signal, STAT4 can also be phosphorylated and activated in response to IFN-gamma stimulation via JAK1 and TYK2 and in response to different interleukins including IL23, IL2 and IL35. Transcription activation of IFN-gamma gene is mediated by interaction with JUN that forms a complex that efficiently interacts with the AP-1-related sequence of the IFN-gamma promoter. In response to IFN-alpha/beta signaling, acts as a transcriptional repressor and suppresses IL5 and IL13 mRNA expression during response to T-cell receptor (TCR) activation. The polypeptide is Signal transducer and activator of transcription 4 (Stat4) (Mus musculus (Mouse)).